The following is a 66-amino-acid chain: Large ribosomal subunit protein uL29 (66 aa).

This sequence belongs to the universal ribosomal protein uL29 family.

This Caldanaerobacter subterraneus subsp. tengcongensis (strain DSM 15242 / JCM 11007 / NBRC 100824 / MB4) (Thermoanaerobacter tengcongensis) protein is Large ribosomal subunit protein uL29.